A 71-amino-acid polypeptide reads, in one-letter code: DNA gyrase inhibitor YacG (71 aa).

4 residues coordinate Zn(2+): C7, C10, C26, and C30.

The protein belongs to the DNA gyrase inhibitor YacG family. As to quaternary structure, interacts with GyrB. Zn(2+) is required as a cofactor.

In terms of biological role, inhibits all the catalytic activities of DNA gyrase by preventing its interaction with DNA. Acts by binding directly to the C-terminal domain of GyrB, which probably disrupts DNA binding by the gyrase. The protein is DNA gyrase inhibitor YacG of Shewanella amazonensis (strain ATCC BAA-1098 / SB2B).